The following is a 325-amino-acid chain: MLTFQQLILKLQSYWDAQGCALLQPIDLEVGAGTSHVHTFLRAIGPEPWRAAYVQPSRRPKDGRYGENPNRLQHYYQYQVVLKPAPENILDLYLGSLQALGLDLKQNDVRFVEDDWENPTLGAWGLGWEVWLNGMEVTQFTYFQQVGGLDCKPITGEITYGIERLAMYLQQVENVYDLVWTEWEEPGPNGPVKRRLTYGDVYHQNEVEQSTYNFEHADTAVLFRRFAEHEAEAKRLMGVREEGAADDGAAVPQLALPAYEQVLKAGHTFNLLDARGAISVTERAAYIGRIRNLSRLVAQAYYDSRERLGFPMCGTAAAPAATEAA.

This sequence belongs to the class-II aminoacyl-tRNA synthetase family. As to quaternary structure, tetramer of two alpha and two beta subunits.

The protein resides in the cytoplasm. It carries out the reaction tRNA(Gly) + glycine + ATP = glycyl-tRNA(Gly) + AMP + diphosphate. This is Glycine--tRNA ligase alpha subunit from Ralstonia nicotianae (strain ATCC BAA-1114 / GMI1000) (Ralstonia solanacearum).